We begin with the raw amino-acid sequence, 214 residues long: Ribosomal RNA small subunit methyltransferase G (214 aa).

S-adenosyl-L-methionine-binding positions include G73, L78, 124-125 (VE), and R139.

Belongs to the methyltransferase superfamily. RNA methyltransferase RsmG family.

It localises to the cytoplasm. The catalysed reaction is guanosine(527) in 16S rRNA + S-adenosyl-L-methionine = N(7)-methylguanosine(527) in 16S rRNA + S-adenosyl-L-homocysteine. Specifically methylates the N7 position of guanine in position 527 of 16S rRNA. The sequence is that of Ribosomal RNA small subunit methyltransferase G from Aeromonas hydrophila subsp. hydrophila (strain ATCC 7966 / DSM 30187 / BCRC 13018 / CCUG 14551 / JCM 1027 / KCTC 2358 / NCIMB 9240 / NCTC 8049).